The sequence spans 177 residues: Chorismate pyruvate-lyase (177 aa).

Residues Met-37, Arg-79, Leu-117, and Glu-159 each coordinate substrate.

The protein belongs to the UbiC family. In terms of assembly, monomer.

Its subcellular location is the cytoplasm. The catalysed reaction is chorismate = 4-hydroxybenzoate + pyruvate. It functions in the pathway cofactor biosynthesis; ubiquinone biosynthesis. Removes the pyruvyl group from chorismate, with concomitant aromatization of the ring, to provide 4-hydroxybenzoate (4HB) for the ubiquinone pathway. The polypeptide is Chorismate pyruvate-lyase (Sodalis glossinidius (strain morsitans)).